The sequence spans 454 residues: Chromosomal replication initiator protein DnaA (454 aa).

A domain I, interacts with DnaA modulators region spans residues Met-1–Tyr-79. A domain II region spans residues Tyr-79 to Ser-117. The tract at residues Asn-118–Ala-334 is domain III, AAA+ region. Residues Gly-162, Gly-164, Lys-165, and Thr-166 each coordinate ATP. The segment at Asn-335–Val-454 is domain IV, binds dsDNA.

This sequence belongs to the DnaA family. As to quaternary structure, oligomerizes as a right-handed, spiral filament on DNA at oriC.

It localises to the cytoplasm. Plays an essential role in the initiation and regulation of chromosomal replication. ATP-DnaA binds to the origin of replication (oriC) to initiate formation of the DNA replication initiation complex once per cell cycle. Binds the DnaA box (a 9 base pair repeat at the origin) and separates the double-stranded (ds)DNA. Forms a right-handed helical filament on oriC DNA; dsDNA binds to the exterior of the filament while single-stranded (ss)DNA is stabiized in the filament's interior. The ATP-DnaA-oriC complex binds and stabilizes one strand of the AT-rich DNA unwinding element (DUE), permitting loading of DNA polymerase. After initiation quickly degrades to an ADP-DnaA complex that is not apt for DNA replication. Binds acidic phospholipids. This is Chromosomal replication initiator protein DnaA from Buchnera aphidicola subsp. Schizaphis graminum (strain Sg).